We begin with the raw amino-acid sequence, 715 residues long: Protein Hook homolog 1 (715 aa).

Residues 6–122 enclose the Calponin-homology (CH) domain; it reads TVLCESLIIW…RLLQLILGCA (117 aa). Coiled coils occupy residues 167 to 434 and 463 to 656; these read AGDT…DQLL and IRLQ…EEKL.

The protein belongs to the hook family. As to quaternary structure, interacts with microtubules.

It localises to the cytoplasm. It is found in the cytoskeleton. In terms of biological role, may function to promote vesicle trafficking and/or fusion. In Danio rerio (Zebrafish), this protein is Protein Hook homolog 1 (hook1).